Here is a 305-residue protein sequence, read N- to C-terminus: UDP-3-O-acyl-N-acetylglucosamine deacetylase (305 aa).

The Zn(2+) site is built by His79, His238, and Asp242. His265 functions as the Proton donor in the catalytic mechanism.

The protein belongs to the LpxC family. The cofactor is Zn(2+).

It catalyses the reaction a UDP-3-O-[(3R)-3-hydroxyacyl]-N-acetyl-alpha-D-glucosamine + H2O = a UDP-3-O-[(3R)-3-hydroxyacyl]-alpha-D-glucosamine + acetate. It functions in the pathway glycolipid biosynthesis; lipid IV(A) biosynthesis; lipid IV(A) from (3R)-3-hydroxytetradecanoyl-[acyl-carrier-protein] and UDP-N-acetyl-alpha-D-glucosamine: step 2/6. Its function is as follows. Catalyzes the hydrolysis of UDP-3-O-myristoyl-N-acetylglucosamine to form UDP-3-O-myristoylglucosamine and acetate, the committed step in lipid A biosynthesis. The chain is UDP-3-O-acyl-N-acetylglucosamine deacetylase from Shigella dysenteriae serotype 1 (strain Sd197).